The sequence spans 294 residues: Undecaprenyl-diphosphatase (294 aa).

6 helical membrane-spanning segments follow: residues 39–59, 93–113, 123–143, 197–217, 234–254, and 265–285; these read PGAA…ILYF, TQMG…GLLF, NLWI…VVDA, VSFL…AVSA, ATIA…IGFL, and FAIY…CGVL.

The protein belongs to the UppP family.

It is found in the cell membrane. The enzyme catalyses di-trans,octa-cis-undecaprenyl diphosphate + H2O = di-trans,octa-cis-undecaprenyl phosphate + phosphate + H(+). In terms of biological role, catalyzes the dephosphorylation of undecaprenyl diphosphate (UPP). Confers resistance to bacitracin. The protein is Undecaprenyl-diphosphatase of Bifidobacterium adolescentis (strain ATCC 15703 / DSM 20083 / NCTC 11814 / E194a).